A 212-amino-acid polypeptide reads, in one-letter code: Thymidylate kinase (212 aa).

Residue 10-17 (GLEGAGKT) coordinates ATP.

This sequence belongs to the thymidylate kinase family.

It carries out the reaction dTMP + ATP = dTDP + ADP. In terms of biological role, phosphorylation of dTMP to form dTDP in both de novo and salvage pathways of dTTP synthesis. The protein is Thymidylate kinase of Serratia proteamaculans (strain 568).